Reading from the N-terminus, the 88-residue chain is Phosphocarrier protein HPr (88 aa).

The HPr domain occupies 1–88 (MEKRDFHVVA…ETMKKEGLSE (88 aa)). His-15 serves as the catalytic Pros-phosphohistidine intermediate. Ser-46 is subject to Phosphoserine; by HPrK/P.

It belongs to the HPr family.

The protein resides in the cytoplasm. With respect to regulation, phosphorylation on Ser-46 inhibits the phosphoryl transfer from enzyme I to HPr. In terms of biological role, general (non sugar-specific) component of the phosphoenolpyruvate-dependent sugar phosphotransferase system (sugar PTS). This major carbohydrate active-transport system catalyzes the phosphorylation of incoming sugar substrates concomitantly with their translocation across the cell membrane. The phosphoryl group from phosphoenolpyruvate (PEP) is transferred to the phosphoryl carrier protein HPr by enzyme I. Phospho-HPr then transfers it to the PTS EIIA domain. Its function is as follows. P-Ser-HPr interacts with the catabolite control protein A (CcpA), forming a complex that binds to DNA at the catabolite response elements cre, operator sites preceding a large number of catabolite-regulated genes. Thus, P-Ser-HPr is a corepressor in carbon catabolite repression (CCR), a mechanism that allows bacteria to coordinate and optimize the utilization of available carbon sources. P-Ser-HPr also plays a role in inducer exclusion, in which it probably interacts with several non-PTS permeases and inhibits their transport activity. In Latilactobacillus sakei (Lactobacillus sakei), this protein is Phosphocarrier protein HPr (ptsH).